A 239-amino-acid chain; its full sequence is Ribonuclease 3 (239 aa).

The RNase III domain occupies Tyr-18–Gly-141. Position 54 (Glu-54) interacts with Mg(2+). The active site involves Asp-58. Residues Ser-127 and Glu-130 each coordinate Mg(2+). Glu-130 is a catalytic residue. The DRBM domain maps to Asp-168–Glu-237.

This sequence belongs to the ribonuclease III family. Homodimer. It depends on Mg(2+) as a cofactor.

Its subcellular location is the cytoplasm. It catalyses the reaction Endonucleolytic cleavage to 5'-phosphomonoester.. Functionally, digests double-stranded RNA. Involved in the processing of primary rRNA transcript to yield the immediate precursors to the large and small rRNAs (23S and 16S). Processes some mRNAs, and tRNAs when they are encoded in the rRNA operon. Processes pre-crRNA and tracrRNA of type II CRISPR loci if present in the organism. This chain is Ribonuclease 3, found in Helicobacter pylori (strain J99 / ATCC 700824) (Campylobacter pylori J99).